The following is a 668-amino-acid chain: MGKIHELSNLLANQIAAGEVIERPASVVKELVENAIDAGATQIDIVVENAGETFIRVVDNGAGIDPVDVPLAFTRHATSKITDRHDLFNIVSLGFRGEALPSIAAIADVELRTKTTETTTGLNYHIKGGKEISATPANGRRGTVITVRDLFYNTPARLKYLKKHQTELSKIVDIINRLALSYTGIAFTVSADGRSLLRTTGNGNQQQVIAGIYGRDNAQKMLAIAGENDDFNITGFISLPELTRGSREYLTVLVNGRYIKNFAVSNAVIRGYGSKLMVGRFPMGVININTNPLLIDVNVHPQKSEIRLSKETELAELLVTTIKNRLAEENLIPDAYETLYGQQNKQQNTQNTQNTFTPKAPWIAAEDSMDGHNAEKMSSQPIRRSPSLVTPVEITKREELSSDRVLTFTQKYTNELPQPVFETDNVVEQQVTEPTVTYQSQYSETGSHSQETLPLSEQKPTGFPALDYIGQMHGTFLFAQSEDSFFLIDQHAAQERVNYEFYREQIGQVTNDQQRLLVPITIDYSVSEMLAIADHQPELMALGLRLEPFGATTMIIREHPTWFEKGQEEETVREMTDWLLRDGQLTVAQFREKAAIMMSCKRAIRANMHLSDTAARQLLAHLSMAENPYNCPHGRPVLTQFTLTEMEKMFKRIQESHEKWESYDNHPF.

Positions 437 to 459 (TYQSQYSETGSHSQETLPLSEQK) are disordered. Positions 438–459 (YQSQYSETGSHSQETLPLSEQK) are enriched in polar residues.

Belongs to the DNA mismatch repair MutL/HexB family.

In terms of biological role, this protein is involved in the repair of mismatches in DNA. It is required for dam-dependent methyl-directed DNA mismatch repair. May act as a 'molecular matchmaker', a protein that promotes the formation of a stable complex between two or more DNA-binding proteins in an ATP-dependent manner without itself being part of a final effector complex. The polypeptide is DNA mismatch repair protein MutL (Leuconostoc citreum (strain KM20)).